Consider the following 177-residue polypeptide: O-acetyl-ADP-ribose deacetylase (177 aa).

The Macro domain maps to 1 to 175; it reads MKSRIHVQHG…LYERLLTQQG (175 aa). Residues 11-12, Asn25, 33-35, and 122-126 each bind substrate; these read DI, GVD, and STGAY. Asp35 (proton acceptor) is an active-site residue.

It belongs to the MacroD-type family. YmdB subfamily. As to quaternary structure, homodimer. Interacts with RNase III.

It carries out the reaction 3''-O-acetyl-ADP-D-ribose + H2O = ADP-D-ribose + acetate + H(+). The enzyme catalyses 2''-O-acetyl-ADP-D-ribose + H2O = ADP-D-ribose + acetate + H(+). Its function is as follows. Deacetylates O-acetyl-ADP ribose to yield ADP-ribose and free acetate. Down-regulates ribonuclease 3 (RNase III) activity. Acts by interacting directly with the region of the ribonuclease that is required for dimerization/activation. This Citrobacter koseri (strain ATCC BAA-895 / CDC 4225-83 / SGSC4696) protein is O-acetyl-ADP-ribose deacetylase.